A 397-amino-acid chain; its full sequence is Lysophospholipid transporter LplT (397 aa).

Over M1 to K17 the chain is Periplasmic. Residues A18–L38 traverse the membrane as a helical segment. Residues A39–P52 are Cytoplasmic-facing. The chain crosses the membrane as a helical span at residues I53–A73. Residues D74–L90 are Periplasmic-facing. Residues L91–V111 form a helical membrane-spanning segment. The Cytoplasmic portion of the chain corresponds to G112–T144. A helical membrane pass occupies residues I145–V165. A166 is a topological domain (periplasmic). Residues L167–L187 traverse the membrane as a helical segment. At A188–S226 the chain is on the cytoplasmic side. A helical transmembrane segment spans residues L227–L247. Topologically, residues G248–T256 are periplasmic. Residues Y257–V277 form a helical membrane-spanning segment. Residues T278 to E280 lie on the Cytoplasmic side of the membrane. Residues T281–L301 form a helical membrane-spanning segment. Topologically, residues Q302–E304 are periplasmic. The chain crosses the membrane as a helical span at residues L305–P325. Topologically, residues L326–A343 are cytoplasmic. A helical membrane pass occupies residues I344–L364. The Periplasmic portion of the chain corresponds to A365–V366. Residues M367 to I387 traverse the membrane as a helical segment. Topologically, residues T388–H397 are cytoplasmic.

This sequence belongs to the major facilitator superfamily. LplT (TC 2.A.1.42) family.

The protein resides in the cell inner membrane. In terms of biological role, catalyzes the facilitated diffusion of 2-acyl-glycero-3-phosphoethanolamine (2-acyl-GPE) into the cell. In Escherichia coli O8 (strain IAI1), this protein is Lysophospholipid transporter LplT.